The following is a 355-amino-acid chain: RNA 3'-terminal phosphate cyclase (355 aa).

Residues Q100 and 300-304 (HLADQ) contribute to the ATP site. Residue H325 is the Tele-AMP-histidine intermediate of the active site.

Belongs to the RNA 3'-terminal cyclase family. Type 1 subfamily.

The protein localises to the cytoplasm. The enzyme catalyses a 3'-end 3'-phospho-ribonucleotide-RNA + ATP = a 3'-end 2',3'-cyclophospho-ribonucleotide-RNA + AMP + diphosphate. Its function is as follows. Catalyzes the conversion of 3'-phosphate to a 2',3'-cyclic phosphodiester at the end of RNA. The mechanism of action of the enzyme occurs in 3 steps: (A) adenylation of the enzyme by ATP; (B) transfer of adenylate to an RNA-N3'P to produce RNA-N3'PP5'A; (C) and attack of the adjacent 2'-hydroxyl on the 3'-phosphorus in the diester linkage to produce the cyclic end product. The biological role of this enzyme is unknown but it is likely to function in some aspects of cellular RNA processing. The sequence is that of RNA 3'-terminal phosphate cyclase from Methanosarcina acetivorans (strain ATCC 35395 / DSM 2834 / JCM 12185 / C2A).